A 318-amino-acid polypeptide reads, in one-letter code: Methionine import ATP-binding protein MetN (318 aa).

The 236-residue stretch at 2 to 237 (IEIKDVGKIF…PEGELKKIIE (236 aa)) folds into the ABC transporter domain. Position 34–41 (34–41 (GRSGAGKS)) interacts with ATP.

It belongs to the ABC transporter superfamily. Methionine importer (TC 3.A.1.24) family. In terms of assembly, the complex is composed of two ATP-binding proteins (MetN), two transmembrane proteins (MetI) and a solute-binding protein (MetQ).

The protein localises to the cell membrane. It carries out the reaction L-methionine(out) + ATP + H2O = L-methionine(in) + ADP + phosphate + H(+). The catalysed reaction is D-methionine(out) + ATP + H2O = D-methionine(in) + ADP + phosphate + H(+). Functionally, part of the ABC transporter complex MetNIQ involved in methionine import. Responsible for energy coupling to the transport system. In Clostridium tetani (strain Massachusetts / E88), this protein is Methionine import ATP-binding protein MetN.